The primary structure comprises 67 residues: MKAEEIRGLADDELVARVLELEEERFRLRFRSGTEALEEPLRLRSIRRDIARLKTVQRERQLAARGR.

The protein belongs to the universal ribosomal protein uL29 family.

This Gemmatimonas aurantiaca (strain DSM 14586 / JCM 11422 / NBRC 100505 / T-27) protein is Large ribosomal subunit protein uL29.